We begin with the raw amino-acid sequence, 406 residues long: Acetate kinase (406 aa).

Position 7 (asparagine 7) interacts with Mg(2+). Lysine 14 is an ATP binding site. Residue arginine 90 coordinates substrate. Catalysis depends on aspartate 147, which acts as the Proton donor/acceptor. Residues 207–211 (HLGNG), 283–285 (DMR), and 331–335 (GVGEN) each bind ATP. Glutamate 385 contacts Mg(2+).

It belongs to the acetokinase family. As to quaternary structure, homodimer. Mg(2+) serves as cofactor. Mn(2+) is required as a cofactor.

It localises to the cytoplasm. It catalyses the reaction acetate + ATP = acetyl phosphate + ADP. It participates in metabolic intermediate biosynthesis; acetyl-CoA biosynthesis; acetyl-CoA from acetate: step 1/2. In terms of biological role, catalyzes the formation of acetyl phosphate from acetate and ATP. Can also catalyze the reverse reaction. The polypeptide is Acetate kinase (Fervidobacterium nodosum (strain ATCC 35602 / DSM 5306 / Rt17-B1)).